The sequence spans 171 residues: MISSPSTPATFAAGSLVLLCLVLGGGHFALAQKEGNDDIQHYTADDCQVTPVIHVLQYPGCVPKPIPSFACVGRCASYIQVSGSKIWQMERSCMCCQESGEREASVSLFCPKAKNGEKKFKKVSTKAPLECMCRPCTGIEDANVIPQELAAFADDGTLTSYFQKGQLRNSE.

The signal sequence occupies residues 1-31 (MISSPSTPATFAAGSLVLLCLVLGGGHFALA). Disulfide bonds link Cys-47–Cys-96, Cys-61–Cys-110, Cys-71–Cys-131, Cys-75–Cys-133, and Cys-93–Cys-136. A CTCK domain is found at 47 to 137 (CQVTPVIHVL…PLECMCRPCT (91 aa)).

Heterodimer of burs and pburs.

Its subcellular location is the secreted. Its function is as follows. Final heterodimeric neurohormone released at the end of the molting cycle, involved in the sclerotization (tanning) of the insect cuticle, melanization and wing spreading. The sequence is that of Bursicon from Culex pipiens pipiens (Northern house mosquito).